Reading from the N-terminus, the 655-residue chain is Probable inactive receptor kinase At1g48480 (655 aa).

An N-terminal signal peptide occupies residues methionine 1–aspartate 32. LRR repeat units lie at residues serine 71–asparagine 95, glutamine 98–serine 120, asparagine 122–leucine 144, histidine 146–threonine 169, lysine 170–leucine 192, and glutamine 194–serine 215. The tract at residues glutamate 234–lysine 260 is disordered. Polar residues predominate over residues valine 237 to proline 249. A helical transmembrane segment spans residues isoleucine 269–valine 289. The region spanning arginine 371–serine 646 is the Protein kinase domain. Serine 373 carries the phosphoserine modification. Leucine 377–alanine 385 lines the ATP pocket. A Phosphothreonine modification is found at threonine 394. Lysine 399 contacts ATP. A Phosphoserine modification is found at serine 450. Threonine 526 carries the phosphothreonine modification. Serine 546 carries the post-translational modification Phosphoserine. Residue threonine 622 is modified to Phosphothreonine.

The protein belongs to the protein kinase superfamily. In terms of tissue distribution, highly expressed in seedlings and leaves. Lower expression in roots, stems, flowers and siliques. Detected in the vascular tissues of roots, in the trichomes of young rosettes leaves and hydathodes, in the floral abscission zones, in filament apex and stomata cells of anthers, in inflorescence stems and in sepals.

Its subcellular location is the cell membrane. This is Probable inactive receptor kinase At1g48480 (RKL1) from Arabidopsis thaliana (Mouse-ear cress).